Here is a 436-residue protein sequence, read N- to C-terminus: S-locus-specific glycoprotein S6 (436 aa).

Positions 1-31 (MKGVRKPYDNSYTLSFLLVFFVLILFCPAFS) are cleaved as a signal peptide. The region spanning 34–156 (TLSSTESLRI…SNNDASEYLW (123 aa)) is the Bulb-type lectin domain. N-linked (GlcNAc...) asparagine glycans are attached at residues Asn46, Asn64, Asn114, Asn121, Asn245, Asn261, and Asn390. In terms of domain architecture, PAN spans 351-431 (CSGDGFTRMK…HGQDLYVRLA (81 aa)). 2 disulfide bridges follow: Cys381-Cys406 and Cys389-Cys391.

Stigma.

In terms of biological role, involved in sporophytic self-incompatibility system (the inability of flowering plants to achieve self-fertilization). The polypeptide is S-locus-specific glycoprotein S6 (SLSG) (Brassica oleracea (Wild cabbage)).